The sequence spans 884 residues: Nonsense-mediated mRNA decay factor EBS1 (884 aa).

Disordered stretches follow at residues 596–645 and 755–774; these read NSMK…PTMG and QGGL…NSAY. Residues 633–645 show a composition bias toward polar residues; that stretch reads RSSSLDSFSPTMG. Positions 760–772 are enriched in low complexity; the sequence is SSQQPSSMSSLNS.

Belongs to the EST1 family. Interacts with NMD helicase UPF1. Interacts with CDC33.

The protein resides in the nucleus. It is found in the chromosome. It localises to the telomere. Its subcellular location is the cytoplasm. The protein localises to the P-body. Functionally, plays a role in nonsense-mediated mRNA decay (NMD). Recruits UPF1 to cytoplasmic mRNA decay bodies (P-bodies). Negative regulator of gene expression. Inhibits translation most likely through effects on eIF-4E (CDC33). Involved in telomere maintenance. The polypeptide is Nonsense-mediated mRNA decay factor EBS1 (Saccharomyces cerevisiae (strain ATCC 204508 / S288c) (Baker's yeast)).